A 417-amino-acid polypeptide reads, in one-letter code: Synaptic vesicle membrane protein VAT-1 homolog-like (417 aa).

Disordered regions lie at residues 1-33 and 382-417; these read MAKEGVEKAEETEQMIEKETSKEPAEGGDGSHR and PTPLMANDSTETSEAGEEEEDHEGDSENKERMPFIQ. Serine 390 bears the Phosphoserine mark. Phosphothreonine occurs at positions 391 and 393. Residue serine 394 is modified to Phosphoserine. Over residues 395–405 the composition is skewed to acidic residues; it reads EAGEEEEDHEG. Residues 406–417 show a composition bias toward basic and acidic residues; that stretch reads DSENKERMPFIQ.

It belongs to the zinc-containing alcohol dehydrogenase family. Quinone oxidoreductase subfamily.

This chain is Synaptic vesicle membrane protein VAT-1 homolog-like (Vat1l), found in Mus musculus (Mouse).